The chain runs to 430 residues: Divergent protein kinase domain 2A (430 aa).

The N-terminal stretch at 1 to 35 is a signal peptide; that stretch reads MWRLVPPKLGRLSRSLKLAALGSLLVLMVLHSPSL.

The protein belongs to the DIPK family.

The protein localises to the cytoplasmic vesicle. It localises to the COPI-coated vesicle. Its subcellular location is the golgi apparatus. The protein resides in the secreted. Functionally, may play a role in cardiomyocyte proliferation through paracrine signaling and activation of the PPI3K-AKT-CDK7 signaling cascade. The protein is Divergent protein kinase domain 2A of Homo sapiens (Human).